The primary structure comprises 282 residues: Putative phosphatase in upp 3'region (282 aa).

Asp-17 acts as the Nucleophile in catalysis. Asp-17 is a binding site for Mg(2+). Leu-18 contributes to the phosphate binding site. A Mg(2+)-binding site is contributed by Asp-19. Residues 53–54 (TG) and Lys-211 contribute to the phosphate site. Asp-234 and Ser-235 together coordinate Mg(2+). Phosphate is bound at residue Asn-237.

The protein belongs to the HAD-like hydrolase superfamily. Cof family. It depends on Mg(2+) as a cofactor.

This chain is Putative phosphatase in upp 3'region, found in Metamycoplasma hominis (Mycoplasma hominis).